The chain runs to 367 residues: Oleoyl-acyl carrier protein thioesterase 2, chloroplastic (367 aa).

The transit peptide at 1 to 48 directs the protein to the chloroplast; that stretch reads MLKLSCNVTDHIHNLFSNSRRIFVPVHRQTRPISCFQLKKEPLRAILS. Active-site residues include Asn263, His265, and Cys300.

It belongs to the acyl-ACP thioesterase family.

It localises to the plastid. It is found in the chloroplast. It carries out the reaction (9Z)-octadecenoyl-[ACP] + H2O = (9Z)-octadecenoate + holo-[ACP] + H(+). Plays an essential role in chain termination during de novo fatty acid synthesis. Possesses high thioesterase activity for oleoyl-ACP versus other acyl-ACPs. In Arabidopsis thaliana (Mouse-ear cress), this protein is Oleoyl-acyl carrier protein thioesterase 2, chloroplastic (FATA2).